The primary structure comprises 317 residues: Non-structural protein 2 (317 aa).

Residues 107-109 (SVR), Lys188, and 221-223 (HGK) each bind ATP. The interval 205–241 (LIAELRWQYNRFAVITHGKGHYRVVKYSSVANHADRV) is RNA-binding. The For NTPase and RTPase activities role is filled by His225. ATP is bound at residue Arg227.

Belongs to the rotavirus NSP2 family. As to quaternary structure, homooctamer. Interacts with VP1; this interaction is weak. Interacts with NSP5; this interaction leads to up-regulation of NSP5 phosphorylation and formation of viral factories. Interacts with host DCP1A, DCP1B, DDX6, EDC4 and EIF2S1/eIF2-alpha; these interactions are probably part of the sequestration of some host SGs and PBs proteins in viral factories. Mg(2+) is required as a cofactor.

It is found in the host cytoplasm. Participates in replication and packaging of the viral genome. Plays a crucial role, together with NSP5, in the formation of virus factories (viroplasms), which are large inclusions in the host cytoplasm where replication intermediates are assembled and viral RNA replication takes place. Displays ssRNA binding, NTPase, RNA triphosphatase (RTPase) and ATP-independent helix-unwinding activities. The unwinding activity may prepare and organize plus-strand RNAs for packaging and replication by removing interfering secondary structures. The RTPase activity plays a role in the removal of the gamma-phosphate from the rotavirus RNA minus strands of dsRNA genome segments. Participates in the selective exclusion of host proteins from stress granules (SG) and P bodies (PB). Also participates in the sequestration of these remodeled organelles in viral factories. The polypeptide is Non-structural protein 2 (Rotavirus A (strain RVA/Human/Japan/KU/1995/G1P1A[8]) (RV-A)).